A 126-amino-acid chain; its full sequence is Protein ApaG (126 aa).

In terms of domain architecture, ApaG spans 2-126 (SDTQHQVNVR…FRLAVPGALH (125 aa)).

The polypeptide is Protein ApaG (Pseudomonas aeruginosa (strain LESB58)).